A 381-amino-acid chain; its full sequence is Cytochrome b (381 aa).

The next 4 helical transmembrane spans lie at 33–53 (FGSLLGICLVIQILTGLFLAM), 77–98 (WLIRNLHANGASMFFMCLFLHV), 113–133 (WNIGVMLLLTVTATAFVGYVL), and 178–198 (FFALHFLLPFVIAGLTLVHLT). Positions 83 and 97 each coordinate heme b. H182 and H196 together coordinate heme b. H201 is a binding site for a ubiquinone. 4 helical membrane-spanning segments follow: residues 226-246 (IKDILGLMFLLLVLLSLALFS), 288-308 (LGGVLALLASILILLVIPFLH), 320-340 (ISQTLFWILTANLITLTWIGG), and 347-367 (FIIIGQPASILYFPLIHHPMP).

It belongs to the cytochrome b family. The cytochrome bc1 complex contains 11 subunits: 3 respiratory subunits (MT-CYB, CYC1 and UQCRFS1), 2 core proteins (UQCRC1 and UQCRC2) and 6 low-molecular weight proteins (UQCRH/QCR6, UQCRB/QCR7, UQCRQ/QCR8, UQCR10/QCR9, UQCR11/QCR10 and a cleavage product of UQCRFS1). This cytochrome bc1 complex then forms a dimer. Heme b serves as cofactor.

It is found in the mitochondrion inner membrane. Its function is as follows. Component of the ubiquinol-cytochrome c reductase complex (complex III or cytochrome b-c1 complex) that is part of the mitochondrial respiratory chain. The b-c1 complex mediates electron transfer from ubiquinol to cytochrome c. Contributes to the generation of a proton gradient across the mitochondrial membrane that is then used for ATP synthesis. The sequence is that of Cytochrome b (MT-CYB) from Sminthopsis youngsoni (Lesser hairy-footed dunnart).